A 657-amino-acid polypeptide reads, in one-letter code: L-type lectin-domain containing receptor kinase I.8 (657 aa).

The N-terminal stretch at 1–23 (MAPGLDLIWMVISFLLLIHLSSQ) is a signal peptide. Residues 24–282 (QETGFSFNGF…QVPHPKMKTS (259 aa)) are Extracellular-facing. The segment at 25–257 (ETGFSFNGFR…NHYILGWSFS (233 aa)) is legume-lectin like. 5 N-linked (GlcNAc...) asparagine glycosylation sites follow: asparagine 74, asparagine 124, asparagine 181, asparagine 204, and asparagine 225. Residues 283–303 (LLLILLLIVLGIILLVLLVGA) traverse the membrane as a helical segment. Topologically, residues 304-657 (YLYRRNKYAE…THSIQYGIGR (354 aa)) are cytoplasmic. One can recognise a Protein kinase domain in the interval 339–611 (FHKDGFLGKG…VQYLDRQVSL (273 aa)). ATP contacts are provided by residues 345–353 (LGKGGFGEV) and lysine 366. Aspartate 462 functions as the Proton acceptor in the catalytic mechanism.

This sequence in the C-terminal section; belongs to the protein kinase superfamily. Ser/Thr protein kinase family. In the N-terminal section; belongs to the leguminous lectin family.

Its subcellular location is the cell membrane. It carries out the reaction L-seryl-[protein] + ATP = O-phospho-L-seryl-[protein] + ADP + H(+). The catalysed reaction is L-threonyl-[protein] + ATP = O-phospho-L-threonyl-[protein] + ADP + H(+). Its function is as follows. Involved in resistance response to the pathogenic fungus Alternaria brassicicola. In Arabidopsis thaliana (Mouse-ear cress), this protein is L-type lectin-domain containing receptor kinase I.8.